We begin with the raw amino-acid sequence, 67 residues long: Large ribosomal subunit protein uL29 (67 aa).

The protein belongs to the universal ribosomal protein uL29 family.

The chain is Large ribosomal subunit protein uL29 from Exiguobacterium sibiricum (strain DSM 17290 / CCUG 55495 / CIP 109462 / JCM 13490 / 255-15).